Consider the following 1905-residue polypeptide: Transport and Golgi organization protein 1 homolog (1905 aa).

Positions 1–22 (MAAAQGLLFWLLLLGPPCRVPG) are cleaved as a signal peptide. The Lumenal segment spans residues 23–1141 (QPEQDPGRRF…EPASVTPLEN (1119 aa)). One can recognise an SH3 domain in the interval 45–107 (MLMYRGEALE…PKDLIQVVHE (63 aa)). The span at 154 to 167 (SEKVKEKTAQRVEE) shows a compositional bias: basic and acidic residues. 2 disordered regions span residues 154-259 (SEKV…HEQE) and 313-621 (TVGK…IKDR). N-linked (GlcNAc...) asparagine glycosylation occurs at N173. Positions 173-190 (NESDAEPEPGEPNSEESE) are enriched in acidic residues. Residues 198–208 (AELRERSEAQK) are compositionally biased toward basic and acidic residues. Residues 209–220 (SHPQVNSQTGHA) show a composition bias toward polar residues. Phosphoserine is present on residues S226 and S229. Residues 234-245 (LQDKLKVPDSEN) are compositionally biased toward basic and acidic residues. A glycan (N-linked (GlcNAc...) asparagine) is linked at N246. Residues 246-255 (NKTSNSSQVS) show a composition bias toward polar residues. Residues 317–327 (EEEENKEDFDE) are compositionally biased toward acidic residues. Composition is skewed to basic and acidic residues over residues 337-366 (EDTK…KVEE) and 373-386 (KKGD…REDT). Acidic residues predominate over residues 392-414 (MEGEENTDTDLESSDSKEEDDPL). Composition is skewed to basic and acidic residues over residues 419–436 (RLGK…KAAD) and 459–480 (HMKD…HEVG). Positions 467 to 527 (VEEPRRDWVQ…ANQENDLKGA (61 aa)) form a coiled coil. The segment covering 488 to 500 (DQAVQGSSQSGHL) has biased composition (polar residues). Residues 531–542 (ISKEMLHEEKPS) show a composition bias toward basic and acidic residues. The N-linked (GlcNAc...) asparagine glycan is linked to N627. Disordered stretches follow at residues 657-908 (QQGG…PHAP), 1036-1059 (APPA…QPPL), and 1085-1118 (PVTR…TPVD). Positions 669 to 714 (VSEKRELPEEEVTRVTKDASDEGQEVRKTGQTDSIEGRGFRPKEPN) are enriched in basic and acidic residues. Over residues 715-730 (PEDEDYSPEELLEDEN) the composition is skewed to acidic residues. 4 stretches are compositionally biased toward basic and acidic residues: residues 736–751 (QSKE…RLDV), 766–789 (TDPE…KNET), 842–859 (SQKK…EGHP), and 868–884 (PGVE…EKFV). S873 carries the post-translational modification Phosphoserine. Residues 1142-1162 (AIAFIYSLVFHLTKTLLATLP) lie within the membrane without spanning it. The Lumenal segment spans residues 1163–1173 (DDVQPGPDFYG). The helical transmembrane segment at 1174–1194 (LPWKPVLITASLGIVSFAVFF) threads the bilayer. Over 1195–1905 (WRTVLAVKSR…DCSPALKQSP (711 aa)) the chain is Cytoplasmic. The interval 1208 to 1647 (VTEQQISEKL…VIVKPMPGRP (440 aa)) is mediates interaction with MIA2. The stretch at 1211–1393 (QQISEKLKNI…SQKDLEVALT (183 aa)) forms a coiled coil. The disordered stretch occupies residues 1416 to 1443 (SESEDQNKGGSESDELANGEVGGDRSEK). Residue S1428 is modified to Phosphoserine. Positions 1484–1636 (NLEDQIKKLE…TQKMAMMQEE (153 aa)) form a coiled coil. Positions 1639-1905 (IVKPMPGRPN…DCSPALKQSP (267 aa)) are disordered. Residues 1647–1664 (PNTQNPPRRGPLSQNGSF) show a composition bias toward polar residues. Phosphoserine occurs at positions 1663, 1675, 1703, 1724, 1738, and 1742. Residues 1748–1905 (DEGKVSMAAK…DCSPALKQSP (158 aa)) form a proline-rich domain (PRD); mediates interaction with the COPII coat subunits SEC23A and SEC23B region. Residues 1776 to 1806 (LLPPIRYGPPPQLCGPFGPRPLPPPFGPGMR) are compositionally biased toward pro residues. R1781 carries the post-translational modification Asymmetric dimethylarginine. Positions 1785–1845 (PPQLCGPFGP…GHAPFRPLGS (61 aa)) are SEC16A-interacting region (SIR); required for its localization to endoplasmic reticulum exit sites and for its interaction with SEC16A. Residues 1821–1831 (GKRDLPLDPRE) show a composition bias toward basic and acidic residues. A phosphoserine mark is found at S1890 and S1904. Positions 1891–1905 (QGASQDCSPALKQSP) are enriched in polar residues.

This sequence belongs to the MIA/OTOR family. Tango1 subfamily. As to quaternary structure, interacts with MIA2. Interacts (via SH3 domain) with COL7A1. Interacts with the COPII coat subunits SEC23A, SEC23B and maybe SEC24C. May interact with APOB and MIA2. Interacts with SEC16A.

It is found in the endoplasmic reticulum membrane. In terms of biological role, plays a role in the transport of cargos that are too large to fit into COPII-coated vesicles and require specific mechanisms to be incorporated into membrane-bound carriers and exported from the endoplasmic reticulum. This protein is required for collagen VII (COL7A1) secretion by loading COL7A1 into transport carriers. It may participate in cargo loading of COL7A1 at endoplasmic reticulum exit sites by binding to COPII coat subunits Sec23/24 and guiding SH3-bound COL7A1 into a growing carrier. Does not play a role in global protein secretion and is apparently specific to COL7A1 cargo loading. However, it may participate in secretion of other proteins in cells that do not secrete COL7A1. It is also specifically required for the secretion of lipoproteins by participating in their export from the endoplasmic reticulum. Required for correct assembly of COPII coat components at endoplasmic reticulum exit sites (ERES) and for the localization of SEC16A and membrane-bound ER-resident complexes consisting of MIA2 and PREB/SEC12 to ERES. In Bos taurus (Bovine), this protein is Transport and Golgi organization protein 1 homolog.